Here is a 312-residue protein sequence, read N- to C-terminus: Pyridoxal kinase (312 aa).

At Met-1 the chain carries N-acetylmethionine. Residues Ser-12 and Thr-47 each coordinate pyridoxal. A pyridoxal 5'-phosphate-binding site is contributed by Thr-47. Position 59 is a phosphoserine (Ser-59). Asp-113 serves as a coordination point for ATP. Asp-113 is a binding site for Na(+). Asp-118 is a Mg(2+) binding site. Thr-148 contacts Na(+). ATP contacts are provided by residues 150 to 153 (NQFE) and 186 to 187 (TS). A Na(+)-binding site is contributed by Thr-186. Residue Ser-213 is modified to Phosphoserine. ATP contacts are provided by residues 226 to 228 (VDA) and Thr-233. 234–235 (GD) is a pyridoxal 5'-phosphate binding site. Asp-235 serves as the catalytic Proton acceptor. At Ser-285 the chain carries Phosphoserine.

This sequence belongs to the pyridoxine kinase family. Homodimer. The cofactor is Zn(2+). Mg(2+) serves as cofactor.

Its subcellular location is the cytoplasm. The protein resides in the cytosol. The catalysed reaction is pyridoxal + ATP = pyridoxal 5'-phosphate + ADP + H(+). It carries out the reaction pyridoxamine + ATP = pyridoxamine 5'-phosphate + ADP + H(+). The enzyme catalyses pyridoxine + ATP = pyridoxine 5'-phosphate + ADP + H(+). It participates in cofactor metabolism; pyridoxal 5'-phosphate salvage; pyridoxal 5'-phosphate from pyridoxal: step 1/1. The protein operates within cofactor metabolism; pyridoxal 5'-phosphate salvage; pyridoxine 5'-phosphate from pyridoxine: step 1/1. Its pathway is cofactor metabolism; pyridoxal 5'-phosphate salvage; pyridoxamine 5'-phosphate from pyridoxamine: step 1/1. Its activity is regulated as follows. Activity is increased in the presence of K(+)or Na(+). In terms of biological role, catalyzes the phosphorylation of the dietary vitamin B6 vitamers pyridoxal (PL), pyridoxine (PN) and pyridoxamine (PM) to form pyridoxal 5'-phosphate (PLP), pyridoxine 5'-phosphate (PNP) and pyridoxamine 5'-phosphate (PMP), respectively. PLP is the active form of vitamin B6, and acts as a cofactor for over 140 different enzymatic reactions. This is Pyridoxal kinase (PDXK) from Bos taurus (Bovine).